Consider the following 1562-residue polypeptide: Pikromycin polyketide synthase component PikAIII (1562 aa).

The 431-residue stretch at 34 to 464 folds into the Ketosynthase family 3 (KS3) domain; sequence HEPVAIVGMA…GTNAHVVLEE (431 aa). The segment at 37 to 1475 is module 5; that stretch reads VAIVGMACRL…TPAALAAHLH (1439 aa). C209 serves as the catalytic Acyl-thioester intermediate; for beta-ketoacyl synthase activity. Catalysis depends on for beta-ketoacyl synthase activity residues H344 and H384. Positions 565–866 are acyltransferase; that stretch reads FVFPGQGTQW…GGQERLVTSL (302 aa). S655 functions as the Acyl-ester intermediate; for acyltransferase activity in the catalytic mechanism. Residues 1116–1293 are beta-ketoacyl reductase; the sequence is GTVLITGGTG…ATSVAWGLWA (178 aa). Residues 1124-1127, 1147-1150, 1176-1177, K1226, and 1248-1249 each bind NADP(+); these read TGAL, SRSG, DV, and YS. Y1263 functions as the Acyl-ester intermediate; for beta-ketoacyl reductase activity in the catalytic mechanism. The Carrier domain maps to 1403–1478; it reads PALLTLVRTH…ALAAHLHEAY (76 aa). O-(pantetheine 4'-phosphoryl)serine is present on S1438. A disordered region spans residues 1519–1548; the sequence is GIEPEPGSGGSDGGAADPGAEPEASIDDLD. Residues 1532 to 1541 are compositionally biased toward low complexity; the sequence is GAADPGAEPE.

In terms of assembly, homodimer. Pikromycin PKS consists of a combination of multimodular (PikAI and PikAII) and monomodular (PikAIII and PikAIV) polypeptides each coding for a functional synthase subunit which participates in 1 (monomodular) or 2 (multimodular) of the six FAS-like elongation steps required for formation of the polyketide. Module 1, 2, 3, 4, 5, and 6 participating in biosynthesis steps 1, 2, 3, 4, 5, and 6, respectively. Pantetheine 4'-phosphate serves as cofactor.

The enzyme catalyses 5 (S)-methylmalonyl-CoA + malonyl-CoA + 5 NADPH + 11 H(+) = 10-deoxymethynolide + 6 CO2 + 5 NADP(+) + 6 CoA + 2 H2O. It carries out the reaction 6 (S)-methylmalonyl-CoA + malonyl-CoA + 5 NADPH + 12 H(+) = narbonolide + 7 CO2 + 5 NADP(+) + 7 CoA + 2 H2O. It participates in antibiotic biosynthesis. Its function is as follows. Involved in the biosynthesis of 12- and 14-membered ring macrolactone antibiotics such as methymycin and neomethymycin, and pikromycin and narbomycin, respectively. Component of the pikromycin PKS which catalyzes the biosynthesis of both precursors 10-deoxymethynolide (12-membered ring macrolactone) and narbonolide (14-membered ring macrolactone). Chain elongation through PikAI, PikAII and PikAIII followed by thioesterase catalyzed termination results in the production of 10-deoxymethynolide, while continued elongation through PikAIV, followed by thioesterase (TE) catalyzed cyclization results in the biosynthesis of the narbonolide. The chain is Pikromycin polyketide synthase component PikAIII from Streptomyces venezuelae.